A 681-amino-acid polypeptide reads, in one-letter code: MPKKKEDSQKTLSEKEAKGLIAKLSDEIRHHQYLYYVKNDPKISDFDFDQLFRRLQDLEEEFPQFKDLASPTLVVGSDLDKDFEKFQHKLPVLSLINTYNDNELLEWVNKTDPEGLYSVEWKIDGASIVLYYENGILKNGVTRGSGGIGDDVTDNIRTIRNIPLRLPEPITVYLRGEVFMTFKDFEEFNALSSGKYANPRNLSAGSIKQKNSSDTAKRPLRIFTYDATFPNMEKKFKTHQEIFSKLEKLTFPVPPNTAFVSGSKIAKTIQEFKKQKDSLGFPTDGLVIKLNDISKRDALGYTSHSPRWARAYKFDAIMKESKIVDITYAVGRTGKITPRAEIEPISLAGTTVTFATLHNQDYIDELGVGIGAIVRVAKRGEIIPAVEEVVTPGKEVFKIPDRCPSCNTQTIKKESLVDLFCPNPDCPDRVKNGIIFYCQRKQMDIEGLGDKQIEFLYDHDYIKSIADLYDLKDQKEKLMEEEGFGEKSVNIILKGIEQSKQKDFRFLLPSLGLSELGHKVTELLIEHGIDSIDEILSIAKDQKKIESLLEIPGIGPSTIQAFQENFSDKRILKLIERLKKAGLKMKADPIQVADQQPFAGQSWCVTGSFENFQPRDKAMDLIVYYGGRKVSAVSSKTTHLLAGPGAGSKLEKANELGVSVYDEKQFLDLLKSLKIDFKNLI.

NAD(+)-binding positions include 45–49 (DFDFD), 94–95 (SL), and Glu-120. Residue Lys-122 is the N6-AMP-lysine intermediate of the active site. NAD(+) is bound by residues Arg-143, Glu-177, Lys-289, and Lys-313. Positions 403, 406, 421, and 426 each coordinate Zn(2+). Residues 593-681 (ADQQPFAGQS…SLKIDFKNLI (89 aa)) enclose the BRCT domain.

This sequence belongs to the NAD-dependent DNA ligase family. LigA subfamily. Mg(2+) is required as a cofactor. The cofactor is Mn(2+).

The enzyme catalyses NAD(+) + (deoxyribonucleotide)n-3'-hydroxyl + 5'-phospho-(deoxyribonucleotide)m = (deoxyribonucleotide)n+m + AMP + beta-nicotinamide D-nucleotide.. DNA ligase that catalyzes the formation of phosphodiester linkages between 5'-phosphoryl and 3'-hydroxyl groups in double-stranded DNA using NAD as a coenzyme and as the energy source for the reaction. It is essential for DNA replication and repair of damaged DNA. This Leptospira interrogans serogroup Icterohaemorrhagiae serovar copenhageni (strain Fiocruz L1-130) protein is DNA ligase.